The primary structure comprises 418 residues: MPGYYLWTIGCQMNQAESERLGRLFELWGYSLADKAEDAELVLVNSCVVREHAENKVINRLHILRKLKDKNPRLKIALTGCLVGQDIASVRKKFPFVDYIFQPGALPDWGEIPEGFILPLKPPVSASITIMQGCDNFCTYCIVPYRRGREKSRSISELCCEAAELVRRGSREVVLLGQNVDSYGHDLPEKPCLADLLYALSDIPGLLRIRFLTSHPKDISQKLIDAMASLHKVCHSLSLPVQAGADTILAAMRRGYTSEQYRELVGRLKTAMPDISLQTDLIVGFPSETAEQFDQSYKLMSDIGYDAIHVAAYSPRPQTAAARDMADDVPVAEKKRRLKLIEDLQKETVSKANSALVDTFAEVLVEGRQKNKWQGRTLGGKLVFLESDLPLEGCLINVKIFKASPWSLQAKLVKILES.

The MTTase N-terminal domain maps to 2 to 118; it reads PGYYLWTIGC…WGEIPEGFIL (117 aa). Residues cysteine 11, cysteine 47, cysteine 81, cysteine 134, cysteine 138, and cysteine 141 each contribute to the [4Fe-4S] cluster site. A Radical SAM core domain is found at 120-352; that stretch reads LKPPVSASIT…DLQKETVSKA (233 aa). Residues 354-414 form the TRAM domain; it reads SALVDTFAEV…PWSLQAKLVK (61 aa).

It belongs to the methylthiotransferase family. MiaB subfamily. Monomer. [4Fe-4S] cluster is required as a cofactor.

The protein localises to the cytoplasm. The catalysed reaction is N(6)-dimethylallyladenosine(37) in tRNA + (sulfur carrier)-SH + AH2 + 2 S-adenosyl-L-methionine = 2-methylsulfanyl-N(6)-dimethylallyladenosine(37) in tRNA + (sulfur carrier)-H + 5'-deoxyadenosine + L-methionine + A + S-adenosyl-L-homocysteine + 2 H(+). Its function is as follows. Catalyzes the methylthiolation of N6-(dimethylallyl)adenosine (i(6)A), leading to the formation of 2-methylthio-N6-(dimethylallyl)adenosine (ms(2)i(6)A) at position 37 in tRNAs that read codons beginning with uridine. The chain is tRNA-2-methylthio-N(6)-dimethylallyladenosine synthase from Dehalococcoides mccartyi (strain ATCC BAA-2266 / KCTC 15142 / 195) (Dehalococcoides ethenogenes (strain 195)).